The chain runs to 130 residues: Cholecystokinin (130 aa).

The N-terminal stretch at 1 to 20 is a signal peptide; it reads MYGGICICVLLAALSVSSLG. Residues 21–48 constitute a propeptide that is removed on maturation; it reads QQPAGSHDGSPVAAELQQSLTEPHRHSR. The interval 21-63 is disordered; sequence QQPAGSHDGSPVAAELQQSLTEPHRHSRAPSSAGPLKPAPRLD. Tyrosine 112 carries the sulfotyrosine modification. Position 118 is a phenylalanine amide (phenylalanine 118). Residues 122-130 constitute a propeptide that is removed on maturation; it reads SAEEYEYSS. Sulfotyrosine is present on residues tyrosine 126 and tyrosine 128.

This sequence belongs to the gastrin/cholecystokinin family. The precursor is cleaved by proteases to produce a number of active cholecystokinins. In terms of tissue distribution, in the small intestine, the major production site is around the vitelline diverticulum.

Its subcellular location is the secreted. Its function is as follows. This peptide hormone induces gall bladder contraction and the release of pancreatic enzymes in the gut. Its function in the brain is not clear. It also decreases food intake and regulates gastrointestinal physiological processes. In Gallus gallus (Chicken), this protein is Cholecystokinin (CCK).